A 283-amino-acid chain; its full sequence is Isochorismatase domain-containing protein 1 (283 aa).

The protein belongs to the isochorismatase family.

The chain is Isochorismatase domain-containing protein 1 (isoc1) from Salmo salar (Atlantic salmon).